Reading from the N-terminus, the 685-residue chain is Frizzled-8 (685 aa).

A signal peptide spans 1–27 (MEWGYLLEVTSLLAALAVLQRSSGAAA). Residues 28–272 (ASAKELACQE…NPFFSQDERA (245 aa)) lie on the Extracellular side of the membrane. Positions 30–151 (AKELACQEIT…GNPDTLCMDY (122 aa)) constitute an FZ domain. Cystine bridges form between Cys-35–Cys-96, Cys-43–Cys-89, Cys-80–Cys-118, Cys-107–Cys-148, and Cys-111–Cys-135. A glycan (N-linked (GlcNAc...) asparagine) is linked at Asn-49. Hexadecanoate is bound at residue 71–78 (QFWPLVEI). The interval 95–100 (ICLEDY) is wnt-binding. Residues 147 to 152 (LCMDYN) are wnt-binding. Asn-152 is a glycosylation site (N-linked (GlcNAc...) asparagine). A disordered region spans residues 155-223 (DLTTAAPSPP…KARPPGGGAA (69 aa)). A compositionally biased stretch (pro residues) spans 161–176 (PSPPRRLPPPPPPGEQ). Low complexity-rich tracts occupy residues 177-187 (PPSGSGHSRPP) and 200-223 (GSGD…GGAA). The helical transmembrane segment at 273–293 (FTVFWIGLWSVLCFVSTFATV) threads the bilayer. The Cytoplasmic segment spans residues 294–309 (STFLIDMERFKYPERP). A helical transmembrane segment spans residues 310–330 (IIFLSACYLFVSVGYLVRLVA). Residues 331-394 (GHEKVACSGG…RYETTGPALC (64 aa)) are Extracellular-facing. A helical membrane pass occupies residues 395 to 415 (TVVFLLVYFFGMASSIWWVIL). At 416 to 437 (SLTWFLAAGMKWGNEAIAGYSQ) the chain is on the cytoplasmic side. The helical transmembrane segment at 438-458 (YFHLAAWLVPSVKSIAVLALS) threads the bilayer. Residues 459–481 (SVDGDPVAGICYVGNQSLDNLRG) lie on the Extracellular side of the membrane. N-linked (GlcNAc...) asparagine glycosylation occurs at Asn-473. The chain crosses the membrane as a helical span at residues 482–502 (FVLAPLVIYLFIGTMFLLAGF). Topologically, residues 503 to 530 (VSLFRIRSVIKQQGGPTKTHKLEKLMIR) are cytoplasmic. A helical membrane pass occupies residues 531-551 (LGLFTVLYTVPAAVVVACLFY). At 552 to 582 (EQHNRPRWEATHNCPCLRDLQPDQARRPDYA) the chain is on the extracellular side. The helical transmembrane segment at 583 to 603 (VFMLKYFMCLVVGITSGVWVW) threads the bilayer. Residues 604–685 (SGKTLESWRA…YPKQMPLSQV (82 aa)) are Cytoplasmic-facing. Positions 606 to 611 (KTLESW) match the Lys-Thr-X-X-X-Trp motif, mediates interaction with the PDZ domain of Dvl family members motif. Residues 631–655 (AGGSGPGGSGPGPGGGGGHGGGGGS) show a composition bias toward gly residues. The interval 631–656 (AGGSGPGGSGPGPGGGGGHGGGGGSL) is disordered. Positions 683–685 (SQV) match the PDZ-binding motif.

This sequence belongs to the G-protein coupled receptor Fz/Smo family. In terms of assembly, component of a Wnt-signaling complex that contains a WNT protein, a FZD protein and LRP5 or LRP6. Interacts directly with LRP5 or LRP6; the interaction is promoted by Wnt-binding and signaling and inhibited by DKK1. Interacts (via the PDZ-binding motif) with GPOC (via its PDZ domain). Interacts with RSPO1 and RSPO3. Interacts with glypican GPC3. Ubiquitinated by ZNRF3, leading to its degradation by the proteasome. Expressed in chondrocytes.

Its subcellular location is the membrane. The protein resides in the golgi apparatus. The protein localises to the cell membrane. Receptor for Wnt proteins. Component of the Wnt-Fzd-LRP5-LRP6 complex that triggers beta-catenin signaling through inducing aggregation of receptor-ligand complexes into ribosome-sized signalosomes. The beta-catenin canonical signaling pathway leads to the activation of disheveled proteins, inhibition of GSK-3 kinase, nuclear accumulation of beta-catenin and activation of Wnt target genes. A second signaling pathway involving PKC and calcium fluxes has been seen for some family members, but it is not yet clear if it represents a distinct pathway or if it can be integrated in the canonical pathway, as PKC seems to be required for Wnt-mediated inactivation of GSK-3 kinase. Both pathways seem to involve interactions with G-proteins. May be involved in transduction and intercellular transmission of polarity information during tissue morphogenesis and/or in differentiated tissues. Coreceptor along with RYK of Wnt proteins, such as WNT1. The protein is Frizzled-8 (Fzd8) of Mus musculus (Mouse).